A 125-amino-acid polypeptide reads, in one-letter code: Small ribosomal subunit protein uS13 (125 aa).

It belongs to the universal ribosomal protein uS13 family. Part of the 30S ribosomal subunit. Forms a loose heterodimer with protein S19. Forms two bridges to the 50S subunit in the 70S ribosome.

Functionally, located at the top of the head of the 30S subunit, it contacts several helices of the 16S rRNA. In the 70S ribosome it contacts the 23S rRNA (bridge B1a) and protein L5 of the 50S subunit (bridge B1b), connecting the 2 subunits; these bridges are implicated in subunit movement. Contacts the tRNAs in the A and P-sites. This is Small ribosomal subunit protein uS13 from Granulibacter bethesdensis (strain ATCC BAA-1260 / CGDNIH1).